Reading from the N-terminus, the 39-residue chain is uncharacterized protein (39 aa).

This is an uncharacterized protein from Treponema pallidum (strain Nichols).